Consider the following 236-residue polypeptide: Leucyl/phenylalanyl-tRNA--protein transferase (236 aa).

This sequence belongs to the L/F-transferase family.

It localises to the cytoplasm. It carries out the reaction N-terminal L-lysyl-[protein] + L-leucyl-tRNA(Leu) = N-terminal L-leucyl-L-lysyl-[protein] + tRNA(Leu) + H(+). The catalysed reaction is N-terminal L-arginyl-[protein] + L-leucyl-tRNA(Leu) = N-terminal L-leucyl-L-arginyl-[protein] + tRNA(Leu) + H(+). It catalyses the reaction L-phenylalanyl-tRNA(Phe) + an N-terminal L-alpha-aminoacyl-[protein] = an N-terminal L-phenylalanyl-L-alpha-aminoacyl-[protein] + tRNA(Phe). Functions in the N-end rule pathway of protein degradation where it conjugates Leu, Phe and, less efficiently, Met from aminoacyl-tRNAs to the N-termini of proteins containing an N-terminal arginine or lysine. This Shewanella sp. (strain MR-7) protein is Leucyl/phenylalanyl-tRNA--protein transferase.